The chain runs to 345 residues: Glycerol-3-phosphate dehydrogenase [NAD(P)+] (345 aa).

NADPH is bound by residues Ser11, Trp12, His32, Arg33, and Lys106. 3 residues coordinate sn-glycerol 3-phosphate: Lys106, Gly137, and Ser139. Ala141 serves as a coordination point for NADPH. Residues Lys192, Asp245, Ser255, Arg256, and Asn257 each contribute to the sn-glycerol 3-phosphate site. The Proton acceptor role is filled by Lys192. Arg256 serves as a coordination point for NADPH. The NADPH site is built by Val280 and Glu282.

Belongs to the NAD-dependent glycerol-3-phosphate dehydrogenase family.

The protein localises to the cytoplasm. The enzyme catalyses sn-glycerol 3-phosphate + NAD(+) = dihydroxyacetone phosphate + NADH + H(+). It catalyses the reaction sn-glycerol 3-phosphate + NADP(+) = dihydroxyacetone phosphate + NADPH + H(+). Its pathway is membrane lipid metabolism; glycerophospholipid metabolism. In terms of biological role, catalyzes the reduction of the glycolytic intermediate dihydroxyacetone phosphate (DHAP) to sn-glycerol 3-phosphate (G3P), the key precursor for phospholipid synthesis. This chain is Glycerol-3-phosphate dehydrogenase [NAD(P)+], found in Bacillus velezensis (strain DSM 23117 / BGSC 10A6 / LMG 26770 / FZB42) (Bacillus amyloliquefaciens subsp. plantarum).